Here is a 1248-residue protein sequence, read N- to C-terminus: MDAKARNCLLQHREALEKDIKTSYIMDHMISDGFLTISEEEKVRNEPTQQQRAAMLIKMILKKDNDSYVSFYNALLHEGYKDLAALLHDGIPVVSSSSGKDSVSGITSYVRTVLCEGGVPQRPVVFVTRKKLVNAIQQKLSKLKGEPGWVTIHGMAGCGKSVLAAEAVRDHSLLEGCFPGGVHWVSVGKQDKSGLLMKLQNLCTRLDQDESFSQRLPLNIEEAKDRLRILMLRKHPRSLLILDDVWDSWVLKAFDSQCQILLTTRDKSVTDSVMGPKYVVPVESSLGKEKGLEILSLFVNMKKADLPEQAHSIIKECKGSPLVVSLIGALLRDFPNRWEYYLKQLQNKQFKRIRKSSSYDYEALDEAMSISVEMLREDIKDYYTDLSILQKDVKVPTKVLCILWDMETEEVEDILQEFVNKSLLFCDRNGKSFRYYLHDLQVDFLTEKNCSQLQDLHKKIITQFQRYHQPHTLSPDQEDCMYWYNFLAYHMASAKMHKELCALMFSLDWIKAKTELVGPAHLIHEFVEYRHILDEKDCAVSENFQEFLSLNGHLLGRQPFPNIVQLGLCEPETSEVYQQAKLQAKQEVDNGMLYLEWINKKNITNLSRLVVRPHTDAVYHACFSEDGQRIASCGADKTLQVFKAETGEKLLEIKAHEDEVLCCAFSTDDRFIATCSVDKKVKIWNSMTGELVHTYDEHSEQVNCCHFTNSSHHLLLATGSSDCFLKLWDLNQKECRNTMFGHTNSVNHCRFSPDDKLLASCSADGTLKLWDATSANERKSINVKQFFLNLEDPQEDMEVIVKCCSWSADGARIMVAAKNKIFLFDIHTSGLLGEIHTGHHSTIQYCDFSPQNHLAVVALSQYCVELWNTDSRSKVADCRGHLSWVHGVMFSPDGSSFLTSSDDQTIRLWETKKVCKNSAVMLKQEVDVVFQENEVMVLAVDHIRRLQLINGRTGQIDYLTEAQVSCCCLSPHLQYIAFGDENGAIEILELVNNRIFQSRFQHKKTVWHIQFTADEKTLISSSDDAEIQVWNWQLDKCIFLRGHQETVKDFRLLKNSRLLSWSFDGTVKVWNIITGNKEKDFVCHQGTVLSCDISHDATKFSSTSADKTAKIWSFDLLLPLHELRGHNGCVRCSAFSVDSTLLATGDDNGEIRIWNVSNGELLHLCAPLSEEGAATHGGWVTDLCFSPDGKMLISAGGYIKWWNVVTGESSQTFYTNGTNLKKIHVSPDFKTYVTVDNLGILYILQTLE.

In terms of domain architecture, CARD spans 1 to 90 (MDAKARNCLL…KDLAALLHDG (90 aa)). An NB-ARC domain is found at 104 to 415 (SGITSYVRTV…METEEVEDIL (312 aa)). ATP contacts are provided by residues 154 to 161 (GMAGCGKS) and Arg-265. A WD 1-1 repeat occupies 613–652 (PHTDAVYHACFSEDGQRIASCGADKTLQVFKAETGEKLLE). The stretch at 655–694 (AHEDEVLCCAFSTDDRFIATCSVDKKVKIWNSMTGELVHT) is one WD 1-2 repeat. Residues 697–738 (EHSEQVNCCHFTNSSHHLLLATGSSDCFLKLWDLNQKECRNT) form a WD 1-3 repeat. The stretch at 741–780 (GHTNSVNHCRFSPDDKLLASCSADGTLKLWDATSANERKS) is one WD 1-4 repeat. One copy of the WD 1-5 repeat lies at 796-836 (DMEVIVKCCSWSADGARIMVAAKNKIFLFDIHTSGLLGEIH). A WD 1-6 repeat occupies 838 to 877 (GHHSTIQYCDFSPQNHLAVVALSQYCVELWNTDSRSKVAD). The stretch at 880–910 (GHLSWVHGVMFSPDGSSFLTSSDDQTIRLWE) is one WD 1-7 repeat. Positions 910–921 (ETKKVCKNSAVM) are interpropeller linker. The WD 2-1 repeat unit spans residues 922-958 (LKQEVDVVFQENEVMVLAVDHIRRLQLINGRTGQIDY). Residues 959-998 (LTEAQVSCCCLSPHLQYIAFGDENGAIEILELVNNRIFQS) form a WD 2-2 repeat. The WD 2-3 repeat unit spans residues 1001-1040 (QHKKTVWHIQFTADEKTLISSSDDAEIQVWNWQLDKCIFL). One copy of the WD 2-4 repeat lies at 1042-1080 (GHQETVKDFRLLKNSRLLSWSFDGTVKVWNIITGNKEKD). Residues 1083-1122 (CHQGTVLSCDISHDATKFSSTSADKTAKIWSFDLLLPLHE) form a WD 2-5 repeat. A WD 2-6 repeat occupies 1125–1164 (GHNGCVRCSAFSVDSTLLATGDDNGEIRIWNVSNGELLHL). Residues 1175 to 1212 (THGGWVTDLCFSPDGKMLISAGGYIKWWNVVTGESSQT) form a WD 2-7 repeat. A WD 2-8 repeat occupies 1213–1248 (FYTNGTNLKKIHVSPDFKTYVTVDNLGILYILQTLE).

Monomer. Oligomerizes to a heptameric ring, known as the apoptosome, upon binding of cytochrome c and dATP. Oligomeric Apaf-1 and pro-caspase-9 bind to each other via their respective NH2-terminal CARD domains and consecutively mature caspase-9 is released from the complex. Pro-caspase-3 is recruited into the Apaf-1-pro-caspase-9 complex via interaction with pro-caspase-9. Interacts with APIP. Interacts (via CARD and NACHT domains) with NAIP/BIRC1 (via NACHT domain). Interacts with CIAO2A. As to expression, ubiquitous. Highest levels of expression in adult spleen and peripheral blood leukocytes, and in fetal brain, kidney and lung. Isoform 1 is expressed in heart, kidney and liver.

Its subcellular location is the cytoplasm. Functionally, oligomeric Apaf-1 mediates the cytochrome c-dependent autocatalytic activation of pro-caspase-9 (Apaf-3), leading to the activation of caspase-3 and apoptosis. This activation requires ATP. Isoform 6 is less effective in inducing apoptosis. This is Apoptotic protease-activating factor 1 from Homo sapiens (Human).